We begin with the raw amino-acid sequence, 164 residues long: Lipoprotein signal peptidase (164 aa).

Transmembrane regions (helical) follow at residues 12–32, 70–90, and 102–122; these read WLWL…LILQ, WFFA…MYRS, and ALII…GFVV. Active-site residues include D123 and D141. The helical transmembrane segment at 137 to 157 threads the bilayer; sequence FNLADTAICVGAALIVLEGFL.

The protein belongs to the peptidase A8 family.

It localises to the cell inner membrane. The catalysed reaction is Release of signal peptides from bacterial membrane prolipoproteins. Hydrolyzes -Xaa-Yaa-Zaa-|-(S,diacylglyceryl)Cys-, in which Xaa is hydrophobic (preferably Leu), and Yaa (Ala or Ser) and Zaa (Gly or Ala) have small, neutral side chains.. It functions in the pathway protein modification; lipoprotein biosynthesis (signal peptide cleavage). This protein specifically catalyzes the removal of signal peptides from prolipoproteins. In Escherichia coli O6:K15:H31 (strain 536 / UPEC), this protein is Lipoprotein signal peptidase.